The sequence spans 130 residues: Small ribosomal subunit protein uS11 (130 aa).

Residues 1–21 (MAPQSKRSGGRKQKKHVPNGV) form a disordered region. The span at 8–17 (SGGRKQKKHV) shows a compositional bias: basic residues.

The protein belongs to the universal ribosomal protein uS11 family. In terms of assembly, part of the 30S ribosomal subunit. Interacts with proteins S7 and S18. Binds to IF-3.

In terms of biological role, located on the platform of the 30S subunit, it bridges several disparate RNA helices of the 16S rRNA. Forms part of the Shine-Dalgarno cleft in the 70S ribosome. This is Small ribosomal subunit protein uS11 from Acaryochloris marina (strain MBIC 11017).